The sequence spans 370 residues: Aminomethyltransferase (370 aa).

It belongs to the GcvT family. In terms of assembly, the glycine cleavage system is composed of four proteins: P, T, L and H.

The enzyme catalyses N(6)-[(R)-S(8)-aminomethyldihydrolipoyl]-L-lysyl-[protein] + (6S)-5,6,7,8-tetrahydrofolate = N(6)-[(R)-dihydrolipoyl]-L-lysyl-[protein] + (6R)-5,10-methylene-5,6,7,8-tetrahydrofolate + NH4(+). The glycine cleavage system catalyzes the degradation of glycine. The chain is Aminomethyltransferase from Prochlorococcus marinus (strain MIT 9301).